The primary structure comprises 595 residues: Myb-like protein D (595 aa).

Disordered regions lie at residues 1 to 47 (MQQQ…NGLV), 55 to 74 (QQYQDDQNDSFDDDSMDEGE), 82 to 266 (DESQ…NNRK), and 319 to 445 (VLQK…IWTQ). The segment covering 19–47 (DNYNNNNSNINTNNNNSINDYENQNNGLV) has biased composition (low complexity). Residues 60–74 (DQNDSFDDDSMDEGE) show a composition bias toward acidic residues. 2 stretches are compositionally biased toward low complexity: residues 90 to 212 (NNNN…ENNN) and 225 to 264 (NNNNNNNNNNNNNNNNNNNNNNNNKNNNNNNNNNNNNNNN). The span at 324–348 (TLNRNRSRSRSRSNSRSHSRSRSRS) shows a compositional bias: basic residues. Low complexity-rich tracts occupy residues 349-368 (RSLSSISRSRSRSRLIYSRS) and 376-420 (NNNN…NNNN). Residues 423-434 (RKSEDDNQDDGK) are compositionally biased toward basic and acidic residues. The region spanning 435 to 489 (KKHRKNAIWTQEEDEKMAQLYNKYGKSWKAIHSHFDDKTREQVQSHGQYLIRIGK) is the HTH myb-type domain. The H-T-H motif DNA-binding region spans 462–485 (WKAIHSHFDDKTREQVQSHGQYLI). The interval 494–595 (HRDGRKERRK…NSSNYVNNDN (102 aa)) is disordered. The span at 517 to 595 (QQNQQNNNNN…NSSNYVNNDN (79 aa)) shows a compositional bias: low complexity.

Its subcellular location is the nucleus. The sequence is that of Myb-like protein D (mybD) from Dictyostelium discoideum (Social amoeba).